Here is a 293-residue protein sequence, read N- to C-terminus: Protein PET54 (293 aa).

Its subcellular location is the mitochondrion inner membrane. Its function is as follows. Activator of specific mitochondrial mRNAs. PET54 is involved in the excision of intron aI5-beta from pre-mRNA for cytochrome c oxidase I (COX1) and plays a role in promoting the translation of COX3. The polypeptide is Protein PET54 (PET54) (Saccharomyces cerevisiae (strain ATCC 204508 / S288c) (Baker's yeast)).